The chain runs to 462 residues: MSLSLWQQCLARLQDELPATEFSMWIRPLQAELSGNTLALYAPNRFVLDWVREKYINNINGLLNDFCGAEVPLLRFEVGNKPVSQNDSPPQRVVTHTPVAPAPQNTSVRPSWDNTAVQPELSYRSNVNPKHTFDNFVEGKSNQLARAAARQVADNPGGAYNPLFLYGGTGLGKTHLLHAVGNSIMARKANAKVVYMHSERFVQDMVKALQNNAIEEFKRYYRSVDALLIDDIQFFANKERSQEEFFHTFNALLEGNQQIILTSDRYPKEINGVEDRLKSRFGWGLTVAIEPPELETRVAILMKKADENEIQLPGEVAFFIAKRLRSNVRELEGALNRVIANANFTGRAITIDFVREALRDLLALQEKLVTIDNIQKTVAEYYKIKVADLLSKRRSRSVARPRQMAMALAKELTNHSLPEIGDAFGGRDHTTVLHACRKIEQLREESHDIKEDFSNLIRTLSS.

The tract at residues 1 to 86 (MSLSLWQQCL…EVGNKPVSQN (86 aa)) is domain I, interacts with DnaA modulators. Positions 86–125 (NDSPPQRVVTHTPVAPAPQNTSVRPSWDNTAVQPELSYRS) are domain II. The domain III, AAA+ region stretch occupies residues 126-342 (NVNPKHTFDN…GALNRVIANA (217 aa)). 4 residues coordinate ATP: Gly170, Gly172, Lys173, and Thr174. The tract at residues 343–462 (NFTGRAITID…FSNLIRTLSS (120 aa)) is domain IV, binds dsDNA.

This sequence belongs to the DnaA family. In terms of assembly, oligomerizes as a right-handed, spiral filament on DNA at oriC.

Its subcellular location is the cytoplasm. Plays an essential role in the initiation and regulation of chromosomal replication. ATP-DnaA binds to the origin of replication (oriC) to initiate formation of the DNA replication initiation complex once per cell cycle. Binds the DnaA box (a 9 base pair repeat at the origin) and separates the double-stranded (ds)DNA. Forms a right-handed helical filament on oriC DNA; dsDNA binds to the exterior of the filament while single-stranded (ss)DNA is stabiized in the filament's interior. The ATP-DnaA-oriC complex binds and stabilizes one strand of the AT-rich DNA unwinding element (DUE), permitting loading of DNA polymerase. After initiation quickly degrades to an ADP-DnaA complex that is not apt for DNA replication. Binds acidic phospholipids. This Photorhabdus laumondii subsp. laumondii (strain DSM 15139 / CIP 105565 / TT01) (Photorhabdus luminescens subsp. laumondii) protein is Chromosomal replication initiator protein DnaA.